Consider the following 887-residue polypeptide: CWF19-like protein 2 (887 aa).

Residues 1-143 (MEAFSVRFES…DKRTEEECDS (143 aa)) are disordered. Residues 11–103 (ASSIEERKEQ…KKQKCQKQSE (93 aa)) adopt a coiled-coil conformation. The span at 14-72 (IEERKEQTRNARAEVLRQAKHNFEKEQRGEERKRLRDEDTWMLPDVHERIEQFSQEHSE) shows a compositional bias: basic and acidic residues. A Phosphoserine modification is found at Ser71. Over residues 73-98 (KKKKKKDKHSKKVKKEKKKKRKKQKC) the composition is skewed to basic residues. The segment covering 99 to 110 (QKQSESTDSSAS) has biased composition (low complexity). Basic and acidic residues predominate over residues 124-143 (SDKEKTWKVKDKRTEEECDS). The stretch at 164-254 (SSSLKAEKET…RNFEDIVAEK (91 aa)) forms a coiled coil. Residue Lys168 forms a Glycyl lysine isopeptide (Lys-Gly) (interchain with G-Cter in SUMO2) linkage. Disordered stretches follow at residues 315 to 370 (LEME…DEDE) and 405 to 447 (SEES…GRRE). The span at 342-352 (CRRESALRKNQ) shows a compositional bias: basic and acidic residues. Phosphoserine is present on residues Ser354 and Ser366. Residues 414-430 (RSDRRQENRKPSDKKPL) show a composition bias toward basic and acidic residues. Over residues 433–442 (WSYNANQHST) the composition is skewed to polar residues. Ser478 carries the post-translational modification Phosphoserine. Residues 495–524 (IKAEMMGNMELAEQLKAQLKEANKFKETQM) adopt a coiled-coil conformation. Lys597 participates in a covalent cross-link: Glycyl lysine isopeptide (Lys-Gly) (interchain with G-Cter in SUMO2). Ser622 carries the post-translational modification Phosphoserine.

This sequence belongs to the CWF19 family.

This is CWF19-like protein 2 (Cwf19l2) from Mus musculus (Mouse).